A 350-amino-acid chain; its full sequence is Protein RecA (350 aa).

An ATP-binding site is contributed by 67 to 74; sequence GPESSGKT.

This sequence belongs to the RecA family.

It localises to the cytoplasm. Can catalyze the hydrolysis of ATP in the presence of single-stranded DNA, the ATP-dependent uptake of single-stranded DNA by duplex DNA, and the ATP-dependent hybridization of homologous single-stranded DNAs. It interacts with LexA causing its activation and leading to its autocatalytic cleavage. This chain is Protein RecA, found in Baumannia cicadellinicola subsp. Homalodisca coagulata.